The chain runs to 148 residues: Putative anti-anti-sigma factor Rv2638 (148 aa).

Residues 30 to 141 (LRATTDGSGA…PTVDTALGKG (112 aa)) form the STAS domain.

The protein belongs to the anti-sigma-factor antagonist family. As to quaternary structure, interacts with unphosphorylated OprA.

This Mycobacterium tuberculosis (strain ATCC 25618 / H37Rv) protein is Putative anti-anti-sigma factor Rv2638.